The primary structure comprises 370 residues: 3-isopropylmalate dehydrogenase (370 aa).

77 to 90 (GPKWDSVPYEVRPE) serves as a coordination point for NAD(+). Substrate is bound by residues arginine 97, arginine 107, arginine 135, and aspartate 226. Positions 226, 250, and 254 each coordinate Mg(2+). NAD(+) is bound at residue 290-302 (GSAPDIAGQGLAN).

It belongs to the isocitrate and isopropylmalate dehydrogenases family. LeuB type 1 subfamily. As to quaternary structure, homodimer. It depends on Mg(2+) as a cofactor. The cofactor is Mn(2+).

Its subcellular location is the cytoplasm. It carries out the reaction (2R,3S)-3-isopropylmalate + NAD(+) = 4-methyl-2-oxopentanoate + CO2 + NADH. The protein operates within amino-acid biosynthesis; L-leucine biosynthesis; L-leucine from 3-methyl-2-oxobutanoate: step 3/4. Catalyzes the oxidation of 3-carboxy-2-hydroxy-4-methylpentanoate (3-isopropylmalate) to 3-carboxy-4-methyl-2-oxopentanoate. The product decarboxylates to 4-methyl-2 oxopentanoate. The chain is 3-isopropylmalate dehydrogenase from Nitrobacter winogradskyi (strain ATCC 25391 / DSM 10237 / CIP 104748 / NCIMB 11846 / Nb-255).